The following is a 273-amino-acid chain: Small ribosomal subunit protein uS3 (273 aa).

The KH type-2 domain maps to 43 to 111; it reads IRQLMSTGME…QVQLNILEVK (69 aa). Positions 218–227 are enriched in low complexity; it reads QQAAAAPSRG. Residues 218–273 form a disordered region; sequence QQAAAAPSRGRAGDRPGRPGGDRRRRNDRPAAEAAPAAVEAPAAEAAAPAAEGGQA. Basic and acidic residues predominate over residues 228–239; it reads RAGDRPGRPGGD. Over residues 249–273 the composition is skewed to low complexity; that stretch reads AEAAPAAVEAPAAEAAAPAAEGGQA.

Belongs to the universal ribosomal protein uS3 family. As to quaternary structure, part of the 30S ribosomal subunit. Forms a tight complex with proteins S10 and S14.

Its function is as follows. Binds the lower part of the 30S subunit head. Binds mRNA in the 70S ribosome, positioning it for translation. The sequence is that of Small ribosomal subunit protein uS3 from Paenarthrobacter aurescens (strain TC1).